The chain runs to 1523 residues: WD repeat-containing protein 62 (1523 aa).

At A2 the chain carries N-acetylalanine. Phosphoserine is present on S33. T46 carries the post-translational modification Phosphothreonine. WD repeat units follow at residues 109–150, 153–194, 196–234, 291–330, 357–396, 411–450, 490–529, 532–574, 578–618, 626–665, 671–713, and 714–752; these read TTRK…QVAE, GHKY…VVAS, KVSC…EAKV, INLK…YLTN, AVYP…EVSK, EVYP…DTRW, DMKA…ELIK, AHDA…NLEQ, DHSS…DGLH, AEKT…QKKC, GDEG…KMFG, and HSEI…TTCM. A Phosphoserine modification is found at S501. The tract at residues 762–824 is disordered; sequence QEQQQQPKDQ…PSKDSLDPDP (63 aa). Residues 776–790 are compositionally biased toward polar residues; it reads PPSQETYASTPSEIR. A compositionally biased stretch (acidic residues) spans 797-809; that stretch reads QTEDEMEEECEPE. One copy of the WD 13 repeat lies at 803-846; that stretch reads EEECEPEELLKTPSKDSLDPDPRCLLTNGKLPLWAKRLLGDDDV. The segment covering 810–824 has biased composition (basic and acidic residues); sequence ELLKTPSKDSLDPDP. Phosphoserine occurs at positions 966 and 972. The tract at residues 1000–1072 is disordered; that stretch reads VSSVSSKDQS…GLGNGSLPQT (73 aa). T1072 is subject to Phosphothreonine. A phosphoserine mark is found at S1117, S1143, and S1169. The interval 1143–1258 is disordered; sequence SPEAQPVGQG…SLHKPLSPGQ (116 aa). Composition is skewed to polar residues over residues 1167-1177 and 1199-1213; these read YMSSDGTNVLS and TSVL…ISAP. The segment covering 1214–1225 has biased composition (low complexity); that stretch reads SSCSYLESTTSS. A compositionally biased stretch (polar residues) spans 1226 to 1235; sequence HAKTTRSISL. S1234 bears the Phosphoserine mark.

As to quaternary structure, can form homodimers (via C-terminus). Interacts (via C-terminus) with MAPKBP1 (via C-terminus). Interacts with CDK5RAP2, CEP152, CEP63 and KIAA0753. CEP63, CDK5RAP2, CEP152, WDR62 are proposed to form a stepwise assembled complex at the centrosome forming a ring near parental centrioles. In terms of tissue distribution, prominent in neural crest lineages from 9.5 dpc to 11.5 dpc. Also expressed in the ventricular and subventricular zones during the period of cerebral cortical neurogenesis (11.5-16.5 dpc), with expression decreasing in intensity by 17.5 dpc. In the cerebellum, it is strongly expressed in precursors of granule neurons at late embryonic and early postnatal stages; by postnatal day 9 (P9). Present in fetal brain, enriched within the ventricular and subventricular zone (at protein level).

It is found in the nucleus. Its subcellular location is the cytoplasm. It localises to the cytoskeleton. The protein localises to the spindle pole. The protein resides in the microtubule organizing center. It is found in the centrosome. Its subcellular location is the centriole. Functionally, required for cerebral cortical development. Plays a role in neuronal proliferation and migration. Plays a role in mother-centriole-dependent centriole duplication; the function seems also to involve CEP152, CDK5RAP2 and CEP63 through a stepwise assembled complex at the centrosome that recruits CDK2 required for centriole duplication. The sequence is that of WD repeat-containing protein 62 (Wdr62) from Mus musculus (Mouse).